A 390-amino-acid chain; its full sequence is Phosphoprotein (390 aa).

Thr-10 and Thr-16 each carry phosphothreonine. A compositionally biased stretch (polar residues) spans 54-65 (QKNIQHPTASHQ). 2 disordered regions span residues 54–98 (QKNI…EPLF) and 144–183 (RTSTPVTEFKRGAGSRAQGQTIQEEGIDGNGASAGSKERS). Ser-69 carries the post-translational modification Phosphoserine. Residues Thr-91, Thr-150, and Thr-164 each carry the phosphothreonine modification. Ser-187 carries the phosphoserine modification. Thr-249 carries the phosphothreonine modification. A Phosphoserine modification is found at Ser-256. Residues Thr-257 and Thr-281 each carry the phosphothreonine modification. Ser-291 and Ser-293 each carry phosphoserine. Position 297 is a phosphothreonine (Thr-297). A phosphoserine mark is found at Ser-300 and Ser-373. Residues 342–390 (AGRKVMITKMITDCVANPQMKQAFEQRLAKASTEDALNDIKKDIIRSAI) are interaction with the nucleoprotein. Thr-374 carries the post-translational modification Phosphothreonine.

The protein belongs to the rubulavirus/avulavirus P protein family. Homotetramer. Interacts (via multimerization domain) with polymerase L; this interaction forms the polymerase L-P complex. Interacts (via N-terminus) with N0 (via Ncore); this interaction allows P to chaperon N0 to avoid N polymerization before encapsidation. Interacts (via C-terminus) with N-RNA template; this interaction positions the polymerase on the template for both transcription and replication. Interacts with host RPS6KB1 kinase; this interaction may play a role in the viral replication and transcription.

Essential cofactor of the RNA polymerase L that plays a central role in the transcription and replication by forming the polymerase complex with RNA polymerase L and recruiting L to the genomic N-RNA template for RNA synthesis. Also plays a central role in the encapsidation of nascent RNA chains by forming the encapsidation complex with the nucleocapsid protein N (N-P complex). Acts as a chaperone for newly synthesized free N protein, so-called N0, allowing encapsidation of nascent RNA chains during replication. The nucleoprotein protein N prevents excessive phosphorylation of P, which leads to down-regulation of viral transcription/ replication. Participates, together with N, in the formation of viral factories (viroplasms), which are large inclusions in the host cytoplasm where replication takes place. This chain is Phosphoprotein (P/V), found in Homo sapiens (Human).